A 286-amino-acid chain; its full sequence is CBY1-interacting BAR domain-containing protein 1 (286 aa).

The transit peptide at 1-47 (MLRRNLDERDAQTKQLQDAVTNVEKHFGELCQIFAAYVRKTARLRDK) directs the protein to the mitochondrion. Residues 10-220 (DAQTKQLQDA…NIDEDEDLEV (211 aa)) are BAR-like. A coiled-coil region spans residues 107-178 (KMKRDDLKAT…IDNFEKQKIK (72 aa)). The interval 258 to 286 (GQISTCRTRKDQQVEDEDDEELDVTEDEN) is disordered. Residues 271 to 286 (VEDEDDEELDVTEDEN) are compositionally biased toward acidic residues.

It belongs to the CIBAR family. Homodimer (via BAR-like domain). Heterodimer with FAM92B (via BAR-like domains). Interacts (via BAR-like domain) with CBY1; this interaction is required for targeting FAM92A to centriole and cilium basal body. Interacts (via BAR-like domain) with CBY3; both proteins form a ninefold symmetric structure at the flagellar base; are recruited to the annulus in a mutually dependent manner and regulate annulus positionning. Expressed in the heart, liver, spleen, lung, kidney, brain and muscle (at protein level). Strongly expressed throughout the developing limb bud, including the progress zone and the apical ectodermal ridge.

The protein resides in the cytoplasm. The protein localises to the cytoskeleton. It localises to the microtubule organizing center. Its subcellular location is the centrosome. It is found in the centriole. The protein resides in the cilium basal body. The protein localises to the cell projection. It localises to the cilium. Its subcellular location is the nucleus. It is found in the mitochondrion inner membrane. The protein resides in the flagellum. Plays a critical role in regulating mitochondrial ultrastructure and function by maintaining the integrity of mitochondrial morphology, particularly the organization of cristae. Preferentially binds to negatively charged phospholipids like cardiolipin and phosphatidylinositol 4,5-bisphosphate enhancing its interaction with mitochondrial membranes. Induces membrane curvature and tubulation, which are critical for maintaining mitochondrial ultrastructure and the organization of cristae. Plays a crucial role in ciliogenesis. May play a role in limb development through its role in ciliogenesis. Plays a key role in the correct positioning of the annulus, a septin-based ring structure in the sperm flagellum, serving both as a physical barrier and a membrane diffusion barrier that separates the midpiece (MP) from the principal piece (PP). This positioning is essential for proper sperm motility and function. Interacts with CBY3 to form a complex which localizes to the curved membrane region of the flagellar pocket. By doing so, may provide stability and rigidity to the periannular membrane to prevent membrane deformation. This function is crucial for halting annulus migration at the proximal end of the fibrous sheath-containing PP. The sequence is that of CBY1-interacting BAR domain-containing protein 1 from Mus musculus (Mouse).